The chain runs to 230 residues: Large ribosomal subunit protein uL1 (230 aa).

Belongs to the universal ribosomal protein uL1 family. Part of the 50S ribosomal subunit.

Binds directly to 23S rRNA. The L1 stalk is quite mobile in the ribosome, and is involved in E site tRNA release. Functionally, protein L1 is also a translational repressor protein, it controls the translation of the L11 operon by binding to its mRNA. This chain is Large ribosomal subunit protein uL1, found in Bradyrhizobium sp. (strain ORS 278).